Reading from the N-terminus, the 215-residue chain is Ribose-5-phosphate isomerase A (215 aa).

Substrate contacts are provided by residues 26–29 (TGST), 79–82 (DGAD), and 92–95 (KGGG). The Proton acceptor role is filled by E101. K119 provides a ligand contact to substrate.

This sequence belongs to the ribose 5-phosphate isomerase family. As to quaternary structure, homodimer.

The enzyme catalyses aldehydo-D-ribose 5-phosphate = D-ribulose 5-phosphate. It functions in the pathway carbohydrate degradation; pentose phosphate pathway; D-ribose 5-phosphate from D-ribulose 5-phosphate (non-oxidative stage): step 1/1. Its function is as follows. Catalyzes the reversible conversion of ribose-5-phosphate to ribulose 5-phosphate. This chain is Ribose-5-phosphate isomerase A, found in Stenotrophomonas maltophilia (strain K279a).